A 115-amino-acid polypeptide reads, in one-letter code: Holo-[acyl-carrier-protein] synthase (115 aa).

Mg(2+) is bound by residues Asp-6 and Glu-51.

Belongs to the P-Pant transferase superfamily. AcpS family. The cofactor is Mg(2+).

Its subcellular location is the cytoplasm. The catalysed reaction is apo-[ACP] + CoA = holo-[ACP] + adenosine 3',5'-bisphosphate + H(+). Its function is as follows. Transfers the 4'-phosphopantetheine moiety from coenzyme A to a Ser of acyl-carrier-protein. The protein is Holo-[acyl-carrier-protein] synthase of Campylobacter jejuni subsp. jejuni serotype O:6 (strain 81116 / NCTC 11828).